Consider the following 614-residue polypeptide: Dihydroxy-acid dehydratase (614 aa).

D81 provides a ligand contact to Mg(2+). [2Fe-2S] cluster is bound at residue C122. D123 and K124 together coordinate Mg(2+). K124 carries the N6-carboxylysine modification. C195 lines the [2Fe-2S] cluster pocket. E491 is a binding site for Mg(2+). S517 (proton acceptor) is an active-site residue.

It belongs to the IlvD/Edd family. As to quaternary structure, homodimer. Requires [2Fe-2S] cluster as cofactor. It depends on Mg(2+) as a cofactor.

It carries out the reaction (2R)-2,3-dihydroxy-3-methylbutanoate = 3-methyl-2-oxobutanoate + H2O. The enzyme catalyses (2R,3R)-2,3-dihydroxy-3-methylpentanoate = (S)-3-methyl-2-oxopentanoate + H2O. The protein operates within amino-acid biosynthesis; L-isoleucine biosynthesis; L-isoleucine from 2-oxobutanoate: step 3/4. Its pathway is amino-acid biosynthesis; L-valine biosynthesis; L-valine from pyruvate: step 3/4. Functionally, functions in the biosynthesis of branched-chain amino acids. Catalyzes the dehydration of (2R,3R)-2,3-dihydroxy-3-methylpentanoate (2,3-dihydroxy-3-methylvalerate) into 2-oxo-3-methylpentanoate (2-oxo-3-methylvalerate) and of (2R)-2,3-dihydroxy-3-methylbutanoate (2,3-dihydroxyisovalerate) into 2-oxo-3-methylbutanoate (2-oxoisovalerate), the penultimate precursor to L-isoleucine and L-valine, respectively. This is Dihydroxy-acid dehydratase from Actinobacillus succinogenes (strain ATCC 55618 / DSM 22257 / CCUG 43843 / 130Z).